The following is a 230-amino-acid chain: Extracellular deoxyribonuclease (230 aa).

Positions 1 to 20 are cleaved as a signal peptide; sequence MFRPLLSLCLALLVSAPAHA.

The protein belongs to the EndA/NucM nuclease family.

The protein resides in the secreted. The polypeptide is Extracellular deoxyribonuclease (dns) (Aeromonas hydrophila).